The following is a 326-amino-acid chain: Beta-ketoacyl-[acyl-carrier-protein] synthase III (326 aa).

Active-site residues include cysteine 120 and histidine 253. The interval 254–258 (QANIR) is ACP-binding. The active site involves asparagine 283.

The protein belongs to the thiolase-like superfamily. FabH family. In terms of assembly, homodimer.

It is found in the cytoplasm. It catalyses the reaction malonyl-[ACP] + acetyl-CoA + H(+) = 3-oxobutanoyl-[ACP] + CO2 + CoA. It participates in lipid metabolism; fatty acid biosynthesis. In terms of biological role, catalyzes the condensation reaction of fatty acid synthesis by the addition to an acyl acceptor of two carbons from malonyl-ACP. Catalyzes the first condensation reaction which initiates fatty acid synthesis and may therefore play a role in governing the total rate of fatty acid production. Possesses both acetoacetyl-ACP synthase and acetyl transacylase activities. Its substrate specificity determines the biosynthesis of branched-chain and/or straight-chain of fatty acids. This Ralstonia pickettii (strain 12J) protein is Beta-ketoacyl-[acyl-carrier-protein] synthase III.